A 556-amino-acid polypeptide reads, in one-letter code: 2-succinyl-5-enolpyruvyl-6-hydroxy-3-cyclohexene-1-carboxylate synthase (556 aa).

It belongs to the TPP enzyme family. MenD subfamily. Homodimer. The cofactor is Mg(2+). Requires Mn(2+) as cofactor. Thiamine diphosphate serves as cofactor.

The catalysed reaction is isochorismate + 2-oxoglutarate + H(+) = 5-enolpyruvoyl-6-hydroxy-2-succinyl-cyclohex-3-ene-1-carboxylate + CO2. It participates in quinol/quinone metabolism; 1,4-dihydroxy-2-naphthoate biosynthesis; 1,4-dihydroxy-2-naphthoate from chorismate: step 2/7. It functions in the pathway quinol/quinone metabolism; menaquinone biosynthesis. Catalyzes the thiamine diphosphate-dependent decarboxylation of 2-oxoglutarate and the subsequent addition of the resulting succinic semialdehyde-thiamine pyrophosphate anion to isochorismate to yield 2-succinyl-5-enolpyruvyl-6-hydroxy-3-cyclohexene-1-carboxylate (SEPHCHC). The sequence is that of 2-succinyl-5-enolpyruvyl-6-hydroxy-3-cyclohexene-1-carboxylate synthase from Salmonella typhi.